A 1382-amino-acid polypeptide reads, in one-letter code: DNA-directed RNA polymerase subunit beta' (1382 aa).

The Zn(2+) site is built by C70, C72, C85, and C88. 3 residues coordinate Mg(2+): D460, D462, and D464. Zn(2+)-binding residues include C808, C882, C889, and C892.

Belongs to the RNA polymerase beta' chain family. The RNAP catalytic core consists of 2 alpha, 1 beta, 1 beta' and 1 omega subunit. When a sigma factor is associated with the core the holoenzyme is formed, which can initiate transcription. Mg(2+) is required as a cofactor. It depends on Zn(2+) as a cofactor.

It carries out the reaction RNA(n) + a ribonucleoside 5'-triphosphate = RNA(n+1) + diphosphate. DNA-dependent RNA polymerase catalyzes the transcription of DNA into RNA using the four ribonucleoside triphosphates as substrates. The polypeptide is DNA-directed RNA polymerase subunit beta' (Citrifermentans bemidjiense (strain ATCC BAA-1014 / DSM 16622 / JCM 12645 / Bem) (Geobacter bemidjiensis)).